A 260-amino-acid chain; its full sequence is Endomucin (260 aa).

Residues 1-18 form the signal peptide; that stretch reads MELLQVTILFLLPSICSS. 4 N-linked (GlcNAc...) asparagine glycosylation sites follow: N19, N28, N97, and N103. The Extracellular portion of the chain corresponds to 19 to 189; the sequence is NSTGVLEAAN…TSATSRSYSS (171 aa). Composition is skewed to polar residues over residues 119–133 and 145–170; these read QSSK…SIKT and ASPS…SQVI. The tract at residues 119-182 is disordered; that stretch reads QSSKPKTETQ…EGGKNASTSA (64 aa). Residues N163 and N177 are each glycosylated (N-linked (GlcNAc...) asparagine). A helical transmembrane segment spans residues 190–210; it reads IILPVVIALIVITLSVFVLVG. At 211–260 the chain is on the cytoplasmic side; the sequence is LYRMCWKADPGTPENGNDQPQSDKESVKLLTVKTISHESGEHSAQGKTKN. S236 bears the Phosphoserine mark.

Post-translationally, highly O-glycosylated. Sialic acid-rich glycoprotein.

The protein localises to the membrane. In terms of biological role, endothelial sialomucin, also called endomucin or mucin-like sialoglycoprotein, which interferes with the assembly of focal adhesion complexes and inhibits interaction between cells and the extracellular matrix. The chain is Endomucin (EMCN) from Pongo abelii (Sumatran orangutan).